Here is a 558-residue protein sequence, read N- to C-terminus: Cytochrome P450 monooxygenase grgG (558 aa).

A helical transmembrane segment spans residues 11–31 (PASFIYFPLLILVGHALIFIL). C470 is a binding site for heme.

The protein belongs to the cytochrome P450 family. Requires heme as cofactor.

It is found in the membrane. It functions in the pathway secondary metabolite biosynthesis. Functionally, cytochrome P450 monooxygenase; part of the gene cluster that mediates the biosynthesis of gregatin A, a fungal polyketide featuring an alkylated furanone core. The PKS grgA synthesizes C11 and C4 polyketide chains in the presence and absence of the trans-enoyl reductase grgB, respectively. The polyketide transferase grgF is then responsible for the fusion of the two carbon chains to produce the furanone skeleton of gregatin A. Next, the cytochrome P450 monooxygenase grgG performs the oxidative cyclization to furnish the gregatin scaffold and leads to the formation of desmethylgregatin A. In this transformation, grgG initially abstracts a hydrogen atom from C-8 to generate a substrate radical, from which one electron is transferred to the iron-heme center to yield a carbocationic species. Heterocyclization along with double-bond isomerizations provides desmethylgregatin A with the furanone ring. Alternatively, grgG might provide hydroxylation at the C-8 radical, which is followed by dehydration to give the cyclized desmethylgregatin A. Finally, the O-methyltransferase grgD methylates the carboxyl group of desmethylgregatin A to provide gregatin A. In Penicillium sp, this protein is Cytochrome P450 monooxygenase grgG (grgG).